The primary structure comprises 268 residues: Enoyl-[acyl-carrier-protein] reductase [NADH] (268 aa).

Residues 20-21 (SI), 64-65 (DV), and 95-96 (IA) contribute to the NAD(+) site. Residue tyrosine 157 coordinates substrate. Lysine 164 and isoleucine 193 together coordinate NAD(+).

It belongs to the short-chain dehydrogenases/reductases (SDR) family. FabI subfamily. In terms of assembly, homodimer. Homotetramer.

The catalysed reaction is a 2,3-saturated acyl-[ACP] + NAD(+) = a (2E)-enoyl-[ACP] + NADH + H(+). It carries out the reaction a 2,3-saturated acyl-CoA + NAD(+) = a (2E)-enoyl-CoA + NADH + H(+). It participates in lipid metabolism; mycolic acid biosynthesis. Its function is as follows. Enoyl-ACP reductase of the type II fatty acid syntase (FAS-II) system, which is involved in the biosynthesis of mycolic acids, a major component of mycobacterial cell walls. Catalyzes the NADH-dependent reduction of the double bond of 2-trans-enoyl-[acyl-carrier protein], an essential step in the fatty acid elongation cycle of the FAS-II pathway. Shows preference for long-chain fatty acyl thioester substrates, and can also use 2-trans-enoyl-CoAs as alternative substrates. The mycobacterial FAS-II system utilizes the products of the FAS-I system as primers to extend fatty acyl chain lengths up to C56, forming the meromycolate chain that serves as the precursor for final mycolic acids. In Mycobacterium avium, this protein is Enoyl-[acyl-carrier-protein] reductase [NADH].